Here is a 141-residue protein sequence, read N- to C-terminus: uncharacterized protein (141 aa).

The region spanning 10 to 117 (IFCDIVQGSI…VPKYETGKGF (108 aa)) is the HIT domain. The Histidine triad motif signature appears at 102-106 (HFHLH).

This is an uncharacterized protein from Mycoplasma genitalium (strain ATCC 33530 / DSM 19775 / NCTC 10195 / G37) (Mycoplasmoides genitalium).